Here is a 376-residue protein sequence, read N- to C-terminus: Putative C-mannosyltransferase DPY19L2P2 (376 aa).

A glycan (N-linked (GlcNAc...) asparagine) is linked at Asn32. 6 helical membrane passes run 52–72, 107–127, 154–174, 182–202, 233–253, and 299–319; these read ACFY…LFFI, LRES…TLIL, AQFI…VGYI, IIYM…GNSM, LNCW…LKFL, and LLIY…CFIF.

This sequence belongs to the dpy-19 family. Fibroblast, lung, lymphoblast, spleen and testis.

Its subcellular location is the membrane. In terms of biological role, probable C-mannosyltransferase that mediates C-mannosylation of tryptophan residues on target proteins. The sequence is that of Putative C-mannosyltransferase DPY19L2P2 (DPY19L2P2) from Homo sapiens (Human).